We begin with the raw amino-acid sequence, 248 residues long: Pyridoxine 5'-phosphate synthase (248 aa).

Asn-12 lines the 3-amino-2-oxopropyl phosphate pocket. 14–15 (DH) is a 1-deoxy-D-xylulose 5-phosphate binding site. Arg-23 contacts 3-amino-2-oxopropyl phosphate. The active-site Proton acceptor is His-48. Residues Arg-50 and His-55 each contribute to the 1-deoxy-D-xylulose 5-phosphate site. Glu-75 acts as the Proton acceptor in catalysis. Thr-105 contacts 1-deoxy-D-xylulose 5-phosphate. His-196 (proton donor) is an active-site residue. Residues Gly-197 and 218–219 (GH) contribute to the 3-amino-2-oxopropyl phosphate site.

It belongs to the PNP synthase family. In terms of assembly, homooctamer; tetramer of dimers.

It localises to the cytoplasm. The enzyme catalyses 3-amino-2-oxopropyl phosphate + 1-deoxy-D-xylulose 5-phosphate = pyridoxine 5'-phosphate + phosphate + 2 H2O + H(+). Its pathway is cofactor biosynthesis; pyridoxine 5'-phosphate biosynthesis; pyridoxine 5'-phosphate from D-erythrose 4-phosphate: step 5/5. Its function is as follows. Catalyzes the complicated ring closure reaction between the two acyclic compounds 1-deoxy-D-xylulose-5-phosphate (DXP) and 3-amino-2-oxopropyl phosphate (1-amino-acetone-3-phosphate or AAP) to form pyridoxine 5'-phosphate (PNP) and inorganic phosphate. This is Pyridoxine 5'-phosphate synthase from Pseudomonas aeruginosa (strain UCBPP-PA14).